The primary structure comprises 1225 residues: DNA-directed RNA polymerase subunit beta' (1225 aa).

Zn(2+)-binding residues include cysteine 60, cysteine 62, cysteine 75, and cysteine 78. The Mg(2+) site is built by aspartate 450, aspartate 452, and aspartate 454. Cysteine 818, cysteine 892, cysteine 899, and cysteine 902 together coordinate Zn(2+).

Belongs to the RNA polymerase beta' chain family. In terms of assembly, the RNAP catalytic core consists of 2 alpha, 1 beta, 1 beta' and 1 omega subunit. When a sigma factor is associated with the core the holoenzyme is formed, which can initiate transcription. Mg(2+) serves as cofactor. Requires Zn(2+) as cofactor.

It catalyses the reaction RNA(n) + a ribonucleoside 5'-triphosphate = RNA(n+1) + diphosphate. Its function is as follows. DNA-dependent RNA polymerase catalyzes the transcription of DNA into RNA using the four ribonucleoside triphosphates as substrates. The chain is DNA-directed RNA polymerase subunit beta' from Streptococcus pneumoniae serotype 19F (strain G54).